The following is a 230-amino-acid chain: Germin-like protein 5-1 (230 aa).

The signal sequence occupies residues 1–20 (MAMVGRSLLLLLLLVTLAAG). A disulfide bridge connects residues C38 and C53. A Cupin type-1 domain is found at 86 to 219 (YGFTARSVDI…TLLTDEATVD (134 aa)). Mn(2+)-binding residues include H119, H121, E126, and H167. The N-linked (GlcNAc...) asparagine glycan is linked to N172.

This sequence belongs to the germin family. As to quaternary structure, oligomer (believed to be a pentamer but probably hexamer).

The protein localises to the secreted. It is found in the extracellular space. It localises to the apoplast. In terms of biological role, may play a role in plant defense. Probably has no oxalate oxidase activity even if the active site is conserved. This chain is Germin-like protein 5-1, found in Oryza sativa subsp. japonica (Rice).